We begin with the raw amino-acid sequence, 157 residues long: Transcription elongation factor GreA (157 aa).

The segment at Met1–Glu24 is disordered. Over residues His12 to Glu24 the composition is skewed to basic and acidic residues. A coiled-coil region spans residues Glu53–Glu73.

Belongs to the GreA/GreB family.

Its function is as follows. Necessary for efficient RNA polymerase transcription elongation past template-encoded arresting sites. The arresting sites in DNA have the property of trapping a certain fraction of elongating RNA polymerases that pass through, resulting in locked ternary complexes. Cleavage of the nascent transcript by cleavage factors such as GreA or GreB allows the resumption of elongation from the new 3'terminus. GreA releases sequences of 2 to 3 nucleotides. The sequence is that of Transcription elongation factor GreA from Beijerinckia indica subsp. indica (strain ATCC 9039 / DSM 1715 / NCIMB 8712).